A 577-amino-acid chain; its full sequence is Sensory neuron membrane protein 2 (577 aa).

Topologically, residues 1–6 are cytoplasmic; the sequence is MVQCTL. The helical transmembrane segment at 7-27 threads the bilayer; that stretch reads IWAGIGAMMAVSGALLGWVVF. Residues 28 to 519 lie on the Extracellular side of the membrane; sequence PRAVHEKVIE…LMKVLSLLDV (492 aa). 4 N-linked (GlcNAc...) asparagine glycosylation sites follow: Asn-66, Asn-161, Asn-271, and Asn-307. 3 disulfide bridges follow: Cys-316-Cys-384, Cys-345-Cys-411, and Cys-386-Cys-400. The helical transmembrane segment at 520-540 threads the bilayer; that stretch reads VQWVLIGVGLLLAVLMPTVYF. At 541–577 the chain is on the cytoplasmic side; sequence VKRCRGEGSRTVSPAVTATTSAASLSTVAGVTGDRSK.

This sequence belongs to the CD36 family.

Its subcellular location is the cell membrane. Its function is as follows. Plays an olfactory role that is not restricted to pheromone sensitivity. This is Sensory neuron membrane protein 2 from Anopheles gambiae (African malaria mosquito).